The chain runs to 558 residues: MPTKKHRRKDPESPQEPSEKTKEQLVEGELRKLRQQFRKMVDSRKSFNFRSQQKITNQRKEIKTLQEEQDEITLLLNLIKSSRNLDLNEKNYLELRFLLQTKEDYEALIKSMKLLLAELDEKIVQMEKKIINQRQIFTKIQEANNPRKLQKQIHILETRLNLVTVHFDQMLTTNAKLRKEIEDLRHEKAAYDNVYQHLRRRLLTKKKTMNVAIEQSAQAYEQRLEAMARMAAMKDRQQKDISQYNLEIRELERVYDHETKLKSFLLIKLNDRLEFEEQSKKEEALKAKKYGKKSKGASFESYEVAHLRLLKLTKTGNLNQLIEEFLAKEEKNFARFTYVTELNNDMEMMHKKIERIQNEILRLRSQQKSSHDDSYSILRELEEKLKKTTEEADMYENDYREITKTLEYLKNSVENLFKKINCDATKILVQLGETGKVTDINLPQYFAIIEKKTNDLLVLESYKRLMEMEVAEAEVQPSFLNPFWGGSALLKPAEPIKVIPPVLGADPLSDKLDEVEQPLDHSSLRQMVLSHYATRESRNRDSMPEKGDELKSKKKVTV.

Residues 1–26 are disordered; that stretch reads MPTKKHRRKDPESPQEPSEKTKEQLV. Residues 9 to 26 are compositionally biased toward basic and acidic residues; that stretch reads KDPESPQEPSEKTKEQLV. Coiled coils occupy residues 48 to 289 and 339 to 416; these read NFRS…KAKK and VTEL…VENL. Positions 531 to 558 are disordered; sequence HYATRESRNRDSMPEKGDELKSKKKVTV. Basic and acidic residues predominate over residues 533–551; sequence ATRESRNRDSMPEKGDELK.

Its function is as follows. Plays a role in spermiogenesis. Involved in the elongation of flagella and the formation of sperm heads. This is Coiled-coil domain-containing protein 63 from Bos taurus (Bovine).